The sequence spans 276 residues: Rhomboid protease GlpG (276 aa).

6 helical membrane passes run 94–114 (GPVT…MQIL), 142–162 (ALMH…WYLG), 169–189 (LGSG…GYVQ), 192–212 (FSGP…GYVW), 229–249 (LIIF…GMSM), and 250–270 (ANGA…VDSL). Serine 201 serves as the catalytic Nucleophile. Histidine 254 is an active-site residue.

This sequence belongs to the peptidase S54 family.

Its subcellular location is the cell inner membrane. The catalysed reaction is Cleaves type-1 transmembrane domains using a catalytic dyad composed of serine and histidine that are contributed by different transmembrane domains.. In terms of biological role, rhomboid-type serine protease that catalyzes intramembrane proteolysis. This chain is Rhomboid protease GlpG, found in Shigella boydii serotype 4 (strain Sb227).